Consider the following 58-residue polypeptide: MESIFLHANITIIPHSVLYVSLSYYIINPCVSVSTNLDDYFSSFVSSSNTVYDNILVT.

Residues 5-27 (FLHANITIIPHSVLYVSLSYYII) traverse the membrane as a helical segment.

The protein localises to the membrane. This is an uncharacterized protein from Saccharomyces cerevisiae (strain ATCC 204508 / S288c) (Baker's yeast).